A 43-amino-acid chain; its full sequence is uncharacterized protein (43 aa).

A signal peptide spans 1 to 16 (MKLLNFILIIFNALKS). The N-linked (GlcNAc...) asparagine; by host glycan is linked to Asn-37.

This is an uncharacterized protein from Acheta domesticus (House cricket).